We begin with the raw amino-acid sequence, 1174 residues long: Ribonucleoside-diphosphate reductase large subunit-like protein (1174 aa).

Residues 50 to 72 (PYVRIMNGVSGIQIGNHNAMSIA) carry the RIP homotypic interaction motif (RHIM) motif. Disordered stretches follow at residues 170-269 (ASNA…KLKP) and 291-325 (AAAA…DQSS). 3 stretches are compositionally biased toward low complexity: residues 182 to 202 (ATSG…AATA), 233 to 243 (HVSVGTQATPS), and 291 to 316 (AAAA…AMAT).

Belongs to the ribonucleoside diphosphate reductase large chain family. Self-assembles into homo-oligomeric amyloid fibrils. Interacts with host RIPK1 (via RIP homotypic interaction motif); this interaction inhibits RIPK1 ubiquitination thereby preventing effective activation of host NF-kappa-B. Interacts with host RIPK3 (via RIP homotypic interaction motif); this interaction disrupts RIPK3-RIPK1 interactions characteristic of TNF-alpha induced necroptosis, thereby suppressing this death pathway. Interacts (via RIP homotypic interaction motif) with host ZBP1 (via RIP homotypic interaction motif); this interaction inhibits recruitment of RIPK1 and RIPK3 to ZBP1 and prevents ZBP1-induced NF-kappa-B activation. Undergoes proteolytic cleavage, generating two peptides, a N-terminal and a 116 kDa. The N-terminal peptide retains RIPK1- and RIPK3-binding activity as well as cell death suppression activity.

The protein resides in the virion. The protein localises to the host cytoplasm. In terms of biological role, provides optimal viral replication conditions by promoting host cell survival and avoiding the host inflammatory response linked to NF-kappa-B activation. Blocks RIPK1 ubiquitination, thereby preventing NF-kappa-B activation and virally induced inflammatory response. Prevents host necroptosis by targeting RIPK3 thereby preventing the formation of necroptotic RIPK1-RIPK3 complexes. Also inhibits ZBP1-induced necroptosis. Does not have ribonucleotide reductase activity. Betaherpesviruses probably use another strategy to expand the dNTP pool in a quiescent host cell. The sequence is that of Ribonucleoside-diphosphate reductase large subunit-like protein from Murid herpesvirus 1 (strain Smith) (MuHV-1).